A 181-amino-acid polypeptide reads, in one-letter code: Large ribosomal subunit protein uL5 (181 aa).

This sequence belongs to the universal ribosomal protein uL5 family. Part of the 50S ribosomal subunit; part of the 5S rRNA/L5/L18/L25 subcomplex. Contacts the 5S rRNA and the P site tRNA. Forms a bridge to the 30S subunit in the 70S ribosome.

Its function is as follows. This is one of the proteins that bind and probably mediate the attachment of the 5S RNA into the large ribosomal subunit, where it forms part of the central protuberance. In the 70S ribosome it contacts protein S13 of the 30S subunit (bridge B1b), connecting the 2 subunits; this bridge is implicated in subunit movement. Contacts the P site tRNA; the 5S rRNA and some of its associated proteins might help stabilize positioning of ribosome-bound tRNAs. In Thermosipho africanus (strain TCF52B), this protein is Large ribosomal subunit protein uL5.